Consider the following 232-residue polypeptide: YlmG homolog protein 1-1, chloroplastic (232 aa).

The N-terminal 16 residues, 1–16, are a transit peptide targeting the chloroplast; that stretch reads MAAITALTLRSPVYLP. The next 2 helical transmembrane spans lie at 147-167 and 201-221; these read LTVV…VLMV and IIPP…AVLG.

Belongs to the YggT family.

The protein localises to the plastid. The protein resides in the chloroplast thylakoid membrane. In terms of biological role, required for the proper distribution of nucleoids in chloroplasts. The nucleoid partitioning by YLMG1-1 may be related to chloroplast division processes. The protein is YlmG homolog protein 1-1, chloroplastic of Arabidopsis thaliana (Mouse-ear cress).